The chain runs to 124 residues: UPF0102 protein Blon_1698/BLIJ_1758 (124 aa).

Belongs to the UPF0102 family.

In Bifidobacterium longum subsp. infantis (strain ATCC 15697 / DSM 20088 / JCM 1222 / NCTC 11817 / S12), this protein is UPF0102 protein Blon_1698/BLIJ_1758.